Reading from the N-terminus, the 737-residue chain is Catalase-peroxidase (737 aa).

The tryptophyl-tyrosyl-methioninium (Trp-Tyr) (with M-245) cross-link spans 89 to 219 (WHSAGTYRVF…LAASHMGLIY (131 aa)). Catalysis depends on histidine 90, which acts as the Proton acceptor. The tryptophyl-tyrosyl-methioninium (Tyr-Met) (with W-89) cross-link spans 219–245 (YVNPEGPNGNPDPKAAARDIRVTFGRM). Residue histidine 260 participates in heme b binding.

Belongs to the peroxidase family. Peroxidase/catalase subfamily. Homodimer or homotetramer. Heme b serves as cofactor. In terms of processing, formation of the three residue Trp-Tyr-Met cross-link is important for the catalase, but not the peroxidase activity of the enzyme.

The protein resides in the cytoplasm. It carries out the reaction H2O2 + AH2 = A + 2 H2O. The catalysed reaction is 2 H2O2 = O2 + 2 H2O. Functionally, bifunctional enzyme with both catalase and broad-spectrum peroxidase activity. The protein is Catalase-peroxidase of Aspergillus terreus (strain NIH 2624 / FGSC A1156).